A 189-amino-acid chain; its full sequence is Leucine repeat adapter protein 25 (189 aa).

Phosphoserine is present on serine 28. Positions 54-82 (ELSRAARAPDGPRHAAGSANSGSAAGPRR) are disordered. Over residues 68 to 79 (AAGSANSGSAAG) the composition is skewed to low complexity. One copy of the LRR repeat lies at 86-114 (LDSALAALRKEMVGLRQLDMSLLCQLWGL). The tract at residues 136–175 (SSLHSDSSYPPDAGLSDDEEPPDASLPPDPPPLTVPQTHN) is disordered. Residues 159–169 (ASLPPDPPPLT) are compositionally biased toward pro residues. Serine 188 bears the Phosphoserine mark.

The protein belongs to the FAM89 family. Interacts with SKI. Interacts (via LRR repeat) with CDC42BPA (via AGC-kinase C-terminal domain), CDC42BPB (via AGC-kinase C-terminal domain) and LIMK1 (via LIM zinc-binding domains). Forms a tripartite complex with CDC42BPA, CDC42BPB and LIMK1. As to quaternary structure, (Microbial infection) Interacts with mouse mammary tumor virus (MMTV) envelope glycoprotein gp70. As to expression, widely expressed. Expressed in the early postnatal brain.

It is found in the cytoplasm. Its subcellular location is the cell projection. The protein resides in the lamellipodium. The protein localises to the cell surface. Its function is as follows. Negatively regulates TGF-beta-induced signaling; in cooperation with SKI prevents the translocation of SMAD2 from the nucleus to the cytoplasm in response to TGF-beta. Acts as an adapter that mediates the specific recognition of LIMK1 by CDC42BPA and CDC42BPB in the lamellipodia. LRAP25-mediated CDC42BPA/CDC42BPB targeting to LIMK1 and the lamellipodium results in LIMK1 activation and the subsequent phosphorylation of CFL1 which is important for lamellipodial F-actin regulation. Functionally, (Microbial infection) May be a receptor for mouse mammary tumor virus (MMTV). The sequence is that of Leucine repeat adapter protein 25 from Mus musculus (Mouse).